Consider the following 65-residue polypeptide: METQVKVLVLVGALFINTYTDNYKSVDLTHDSEQAYGFKDKWEAQQVAAKVGGQVVVRTTSFKIV.

The protein belongs to the phi29likevirus GP5.5 family.

The protein is Gene product 5B (5B) of Bacillus subtilis (Bacteriophage PZA).